A 358-amino-acid chain; its full sequence is Photosystem II protein D1 2 (358 aa).

The next 3 membrane-spanning stretches (helical) occupy residues 28-45 (YVGW…AATI), 117-132 (HFLI…QWEL), and 141-155 (WICV…AAMV). His-117 serves as a coordination point for chlorophyll a. Residue Tyr-125 coordinates pheophytin a. [CaMn4O5] cluster is bound by residues Asp-169 and Glu-188. The chain crosses the membrane as a helical span at residues 196-217 (FHMLGVAGVFGGSLFSAMHGSL). His-197 is a binding site for chlorophyll a. A quinone-binding positions include His-214 and 263–264 (SF). Residue His-214 participates in Fe cation binding. His-271 contributes to the Fe cation binding site. A helical transmembrane segment spans residues 273 to 287 (FLAAWPVVGIWFTSM). Residues His-331, Glu-332, Asp-341, and Ala-343 each contribute to the [CaMn4O5] cluster site. The propeptide occupies 344 to 358 (TTESAPVALQAPAVG).

This sequence belongs to the reaction center PufL/M/PsbA/D family. As to quaternary structure, PSII is composed of 1 copy each of membrane proteins PsbA, PsbB, PsbC, PsbD, PsbE, PsbF, PsbH, PsbI, PsbJ, PsbK, PsbL, PsbM, PsbT, PsbX, PsbY, PsbZ, Psb30/Ycf12, peripheral proteins PsbO, CyanoQ (PsbQ), PsbU, PsbV and a large number of cofactors. It forms dimeric complexes. The D1/D2 heterodimer binds P680, chlorophylls that are the primary electron donor of PSII, and subsequent electron acceptors. It shares a non-heme iron and each subunit binds pheophytin, quinone, additional chlorophylls, carotenoids and lipids. D1 provides most of the ligands for the Mn4-Ca-O5 cluster of the oxygen-evolving complex (OEC). There is also a Cl(-1) ion associated with D1 and D2, which is required for oxygen evolution. The PSII complex binds additional chlorophylls, carotenoids and specific lipids. is required as a cofactor. In terms of processing, tyr-160 forms a radical intermediate that is referred to as redox-active TyrZ, YZ or Y-Z. Post-translationally, C-terminally processed by CtpA; processing is essential to allow assembly of the oxygen-evolving complex and thus photosynthetic growth.

The protein resides in the cellular thylakoid membrane. It catalyses the reaction 2 a plastoquinone + 4 hnu + 2 H2O = 2 a plastoquinol + O2. Photosystem II (PSII) is a light-driven water:plastoquinone oxidoreductase that uses light energy to abstract electrons from H(2)O, generating O(2) and a proton gradient subsequently used for ATP formation. It consists of a core antenna complex that captures photons, and an electron transfer chain that converts photonic excitation into a charge separation. The D1/D2 (PsbA/PsbD) reaction center heterodimer binds P680, the primary electron donor of PSII as well as several subsequent electron acceptors. The chain is Photosystem II protein D1 2 from Synechococcus sp. (strain RCC307).